Here is a 777-residue protein sequence, read N- to C-terminus: Serine/threonine-protein kinase PTK2 (777 aa).

Residues 21–174 (NKLRGNNDST…ISSGSASSTN (154 aa)) form a disordered region. Positions 30 to 41 (TPAAAPAPVPTK) are enriched in low complexity. 2 stretches are compositionally biased toward polar residues: residues 50 to 61 (AHISRSASTNTP) and 83 to 133 (RRST…SQHM). Low complexity predominate over residues 149 to 172 (SSVRGSSYSRHGSGSHISSGSASS). Residues 222 to 529 (DKDNKTIGSG…MEDLFNDPWF (308 aa)) form the Protein kinase domain. Residues 228 to 236 (IGSGGSSEV) and K252 contribute to the ATP site. D355 (proton acceptor) is an active-site residue. Disordered regions lie at residues 564–705 (DAHP…EITE) and 728–764 (SVSG…KKVV). Polar residues-rich tracts occupy residues 575-592 (TDTN…AGTH) and 648-672 (TNTT…TNEF). The segment covering 677-694 (NATTTDNDNVNTKATTAD) has biased composition (low complexity). Positions 744-756 (NRSIHSNATSTGT) are enriched in polar residues.

It belongs to the protein kinase superfamily. Ser/Thr protein kinase family.

It carries out the reaction L-seryl-[protein] + ATP = O-phospho-L-seryl-[protein] + ADP + H(+). The catalysed reaction is L-threonyl-[protein] + ATP = O-phospho-L-threonyl-[protein] + ADP + H(+). This is Serine/threonine-protein kinase PTK2 (PTK2) from Candida glabrata (strain ATCC 2001 / BCRC 20586 / JCM 3761 / NBRC 0622 / NRRL Y-65 / CBS 138) (Yeast).